A 125-amino-acid chain; its full sequence is Holo-[acyl-carrier-protein] synthase (125 aa).

Mg(2+) contacts are provided by Asp8 and Glu57.

Belongs to the P-Pant transferase superfamily. AcpS family. Mg(2+) is required as a cofactor.

Its subcellular location is the cytoplasm. It carries out the reaction apo-[ACP] + CoA = holo-[ACP] + adenosine 3',5'-bisphosphate + H(+). Functionally, transfers the 4'-phosphopantetheine moiety from coenzyme A to a Ser of acyl-carrier-protein. The chain is Holo-[acyl-carrier-protein] synthase from Koribacter versatilis (strain Ellin345).